The following is a 379-amino-acid chain: MSTEGQIIKCKAAVAWEAGKDLSIEEIEVLPPRAHEVRVKVEFTGVCHTDAYTLSGADAEGSFPVVFGHEGAGVVESVGEGVESVKVGDSVVLLYTPECRECKFCLSGKTNLCGKIRATQGKGLLPDGTSRFRCKGKDLFHYMGCSSFSQYTVVADISVVKVQDEAPKDKTCLLGCGVTTGYGAAINTAKISKGDKIGVFGAGCIGLSVIQGAVSKGASEIIVIDINDSKKAWADQFGATKFVNPTTLPEGTNIVDYLIDITDGGFDYTFDCTGNVQVMRNALESCHKGWGESIIIGVAAAGKEISTRPFQLVTGRVWRGCAFGGIKGRTQMPSLVQDYLDGKIKVDEFITHRHDLDNINKAFHDMHAGNCIRAVITMH.

Residue C47 coordinates Zn(2+). H48 provides a ligand contact to NAD(+). Positions 69, 70, 99, 102, 105, 113, and 176 each coordinate Zn(2+). NAD(+) is bound by residues G201 to G206, D225, and I296 to V298.

Belongs to the zinc-containing alcohol dehydrogenase family. Class-III subfamily. Zn(2+) is required as a cofactor.

The enzyme catalyses a primary alcohol + NAD(+) = an aldehyde + NADH + H(+). It carries out the reaction a secondary alcohol + NAD(+) = a ketone + NADH + H(+). It catalyses the reaction S-(hydroxymethyl)glutathione + NADP(+) = S-formylglutathione + NADPH + H(+). The catalysed reaction is S-(hydroxymethyl)glutathione + NAD(+) = S-formylglutathione + NADH + H(+). The enzyme catalyses S-nitrosoglutathione + NADH + H(+) = S-(hydroxysulfenamide)glutathione + NAD(+). In terms of biological role, oxidizes long-chain alcohols and, in the presence of glutathione, is able to oxidize formaldehyde. Also acts as a S-nitroso-glutathione reductase by catalyzing the NADH-dependent reduction of S-nitrosoglutathione, thereby regulating protein S-nitrosylation. The sequence is that of S-(hydroxymethyl)glutathione dehydrogenase (FLD1) from Komagataella pastoris (Yeast).